The chain runs to 337 residues: MTQPIARSIPLQVVSGDTAAPAPLQTGVKQIGGDKINRSPVQFVDAPVLRKPSWIRVRIPSGNAVQNLKAKLRENRLVTVCEEASCPNIHECFSHGTATFMILGEVCTRRCSFCDVAHGRPKPPDASEPASLAATVADMGLKYVVVTSVDRDDLRDGGAQHFVDCISAIRASSPNTRIEILTPDFRGKGRMDRALEILALSPPDVFNHNIETVPDLYPNVRPGADYQWSLTLLQRFKAQHPSIATKSGIMLGLGETMEQVQATLRDLRAHDVDMITIGQYLQPTPHHHPVMRYWTPEEYKALEDYGNALGFSHVASGPMVRSSYHADRQAAGAGVAA.

Positions 81, 86, 92, 107, 111, 114, and 323 each coordinate [4Fe-4S] cluster. The region spanning 93–312 is the Radical SAM core domain; that stretch reads FSHGTATFMI…EDYGNALGFS (220 aa).

The protein belongs to the radical SAM superfamily. Lipoyl synthase family. [4Fe-4S] cluster is required as a cofactor.

It localises to the cytoplasm. It carries out the reaction [[Fe-S] cluster scaffold protein carrying a second [4Fe-4S](2+) cluster] + N(6)-octanoyl-L-lysyl-[protein] + 2 oxidized [2Fe-2S]-[ferredoxin] + 2 S-adenosyl-L-methionine + 4 H(+) = [[Fe-S] cluster scaffold protein] + N(6)-[(R)-dihydrolipoyl]-L-lysyl-[protein] + 4 Fe(3+) + 2 hydrogen sulfide + 2 5'-deoxyadenosine + 2 L-methionine + 2 reduced [2Fe-2S]-[ferredoxin]. It participates in protein modification; protein lipoylation via endogenous pathway; protein N(6)-(lipoyl)lysine from octanoyl-[acyl-carrier-protein]: step 2/2. Its function is as follows. Catalyzes the radical-mediated insertion of two sulfur atoms into the C-6 and C-8 positions of the octanoyl moiety bound to the lipoyl domains of lipoate-dependent enzymes, thereby converting the octanoylated domains into lipoylated derivatives. The chain is Lipoyl synthase from Xanthomonas euvesicatoria pv. vesicatoria (strain 85-10) (Xanthomonas campestris pv. vesicatoria).